Here is a 159-residue protein sequence, read N- to C-terminus: Probable cyclic pyranopterin monophosphate synthase (159 aa).

Residues 74–76 and 110–111 contribute to the substrate site; these read MCH and ME. The active site involves aspartate 125.

It belongs to the MoaC family. Homohexamer; trimer of dimers.

It catalyses the reaction (8S)-3',8-cyclo-7,8-dihydroguanosine 5'-triphosphate = cyclic pyranopterin phosphate + diphosphate. It participates in cofactor biosynthesis; molybdopterin biosynthesis. Catalyzes the conversion of (8S)-3',8-cyclo-7,8-dihydroguanosine 5'-triphosphate to cyclic pyranopterin monophosphate (cPMP). The protein is Probable cyclic pyranopterin monophosphate synthase of Methanococcoides burtonii (strain DSM 6242 / NBRC 107633 / OCM 468 / ACE-M).